The sequence spans 461 residues: Putative aldehyde dehydrogenase FUS7 (461 aa).

220 to 225 (GSTATG) is an NAD(+) binding site. Catalysis depends on residues glutamate 242 and cysteine 276.

It belongs to the aldehyde dehydrogenase family.

It catalyses the reaction an aldehyde + NAD(+) + H2O = a carboxylate + NADH + 2 H(+). In terms of biological role, putative aldehyde dehydrogenase; part of the gene cluster that mediates the biosynthesis of the mycotoxin fusarin C. Within the cluster, FUS1, FUS2, FUS8 and FUS9 are sufficient for fusarin production. The other FUS cluster members are not essential for fusarin C biosynthesis. The sequence is that of Putative aldehyde dehydrogenase FUS7 from Gibberella moniliformis (strain M3125 / FGSC 7600) (Maize ear and stalk rot fungus).